The sequence spans 122 residues: UPF0102 protein Mpe_A3766 (122 aa).

Belongs to the UPF0102 family.

The chain is UPF0102 protein Mpe_A3766 from Methylibium petroleiphilum (strain ATCC BAA-1232 / LMG 22953 / PM1).